A 334-amino-acid chain; its full sequence is NAD-dependent protein deacylase sirtuin-6 (334 aa).

An N-acetylserine modification is found at Ser-2. Ser-10 carries the phosphoserine modification. Residues 27–272 (PEELERKVWE…CRLMKHLGLE (246 aa)) enclose the Deacetylase sirtuin-type domain. Lys-33 is subject to N6-acetyllysine. Residues Ala-53, Thr-57, Phe-64, Arg-65, Trp-71, Gln-113, and His-133 each coordinate NAD(+). His-133 functions as the Proton acceptor in the catalytic mechanism. Positions 141, 144, and 166 each coordinate Zn(2+). Lys-170 is covalently cross-linked (Glycyl lysine isopeptide (Lys-Gly) (interchain with G-Cter in ubiquitin)). Cys-177 serves as a coordination point for Zn(2+). 5 residues coordinate NAD(+): Gly-214, Ser-216, Asn-240, Gln-242, and Val-258. A disordered region spans residues 312–334 (KSKPNSPILHRPPKRVKTEAAPS).

It belongs to the sirtuin family. Class IV subfamily. As to quaternary structure, homodimer; binds to nucleosomes and DNA ends as a homodimer. Interacts with RELA; interferes with RELA binding to target DNA. Interacts with SMARCA5; promoting recruitment of SMARCA5/SNF2H to double-strand breaks (DSBs) sites. Interacts with the mTORC2 complex; preventing the ability of SIRT6 to deacetylate FOXO1. Interacts with the CLOCK-BMAL1 complex; recruited by the CLOCK-BMAL1 complex to regulate expression of clock-controlled genes. Interacts with CSNK2A2; preventing CSNK2A2 localization to the nucleus. Zn(2+) serves as cofactor. In terms of processing, acetylated at Lys-33. Deacetylation at Lys-33 by SIRT1 promotes homomultimerization and binding to double-strand breaks (DSBs) sites. Post-translationally, phosphorylation at Ser-10 by MAPK8/JNK1 in response to oxidative stress stimulates the mono-ADP-ribosyltransferase activity on PARP1, leading to PARP1 recruitment to double-strand breaks (DSBs). Monoubiquitinated at Lys-170 by STUB1/CHIP, preventing its degradation by the proteasome. In terms of processing, sumoylated, leading to specifically decrease ability to deacetylate histone H3 at 'Lys-56' (H3K56ac). As to expression, highest levels are found in muscle, thymus, spleen, brain and heart (at protein level).

It localises to the nucleus. The protein resides in the chromosome. Its subcellular location is the telomere. It is found in the endoplasmic reticulum. It carries out the reaction N(6)-acetyl-L-lysyl-[protein] + NAD(+) + H2O = 2''-O-acetyl-ADP-D-ribose + nicotinamide + L-lysyl-[protein]. The catalysed reaction is N(6)-tetradecanoyl-L-lysyl-[protein] + NAD(+) + H2O = 2''-O-tetradecanoyl-ADP-D-ribose + nicotinamide + L-lysyl-[protein]. The enzyme catalyses N(6)-hexadecanoyl-L-lysyl-[protein] + NAD(+) + H2O = 2''-O-hexadecanoyl-ADP-D-ribose + nicotinamide + L-lysyl-[protein]. It catalyses the reaction L-lysyl-[protein] + NAD(+) = N(6)-(ADP-D-ribosyl)-L-lysyl-[protein] + nicotinamide + H(+). It carries out the reaction L-arginyl-[protein] + NAD(+) = N(omega)-(ADP-D-ribosyl)-L-arginyl-[protein] + nicotinamide + H(+). Its activity is regulated as follows. Compared to the defatty-acylase activity, the protein deacetylase activity is weak in vitro, and requires activation. The histone deacetylase activity is strongly activated upon binding to nucleosomes and chromatin in vivo. Two molecules of SIRT6 associate with the acidic patch of one nucleosome, while the C-terminal disordered region of SIRT6 associates with nucleosomal DNA, leading to efficient histone deacetylation. The protein-lysine deacetylase activity is also activated by long-chain free fatty-acids. NAD-dependent protein deacetylase, deacylase and mono-ADP-ribosyltransferase that plays an essential role in DNA damage repair, telomere maintenance, metabolic homeostasis, inflammation, tumorigenesis and aging. Displays protein-lysine deacetylase or defatty-acylase (demyristoylase and depalmitoylase) activity, depending on the context. Acts as a key histone deacetylase by catalyzing deacetylation of histone H3 at 'Lys-9', 'Lys-18' and 'Lys-56' (H3K9ac, H3K18ac and H3K56ac, respectively), suppressing target gene expression of several transcription factors, including NF-kappa-B. Acts as an inhibitor of transcription elongation by mediating deacetylation of H3K9ac and H3K56ac, preventing release of NELFE from chromatin and causing transcriptional pausing. Involved in DNA repair by promoting double-strand break (DSB) repair: acts as a DSB sensor by recognizing and binding DSB sites, leading to (1) recruitment of DNA repair proteins, such as SMARCA5/SNF2H, and (2) deacetylation of histone H3K9ac and H3K56ac. SIRT6 participation to DSB repair is probably involved in extension of life span. Also promotes DNA repair by deacetylating non-histone proteins, such as DDB2 and p53/TP53. Specifically deacetylates H3K18ac at pericentric heterochromatin, thereby maintaining pericentric heterochromatin silencing at centromeres and protecting against genomic instability and cellular senescence. Involved in telomere maintenance by catalyzing deacetylation of histone H3 in telomeric chromatin, regulating telomere position effect and telomere movement in response to DNA damage. Required for embryonic stem cell differentiation by mediating histone deacetylation of H3K9ac. Plays a major role in metabolism by regulating processes such as glycolysis, gluconeogenesis, insulin secretion and lipid metabolism. Inhibits glycolysis via histone deacetylase activity and by acting as a corepressor of the transcription factor HIF1A, thereby controlling the expression of multiple glycolytic genes. Has tumor suppressor activity by repressing glycolysis, thereby inhibiting the Warburg effect. Also regulates glycolysis and tumorigenesis by mediating deacetylation and nuclear export of non-histone proteins, such as isoform M2 of PKM (PKM2). Acts as a negative regulator of gluconeogenesis by mediating deacetylation of non-histone proteins, such as FOXO1 and KAT2A/GCN5. Promotes beta-oxidation of fatty acids during fasting by catalyzing deacetylation of NCOA2, inducing coactivation of PPARA. Acts as a regulator of lipid catabolism in brown adipocytes, both by catalyzing deacetylation of histones and non-histone proteins, such as FOXO1. Also acts as a regulator of circadian rhythms, both by regulating expression of clock-controlled genes involved in lipid and carbohydrate metabolism, and by catalyzing deacetylation of PER2. The defatty-acylase activity is specifically involved in regulation of protein secretion. Has high activity toward long-chain fatty acyl groups and mediates protein-lysine demyristoylation and depalmitoylation of target proteins, such as RRAS2 and TNF, thereby regulating their secretion. Also acts as a mono-ADP-ribosyltransferase by mediating mono-ADP-ribosylation of PARP1, TRIM28/KAP1 or SMARCC2/BAF170. Mono-ADP-ribosyltransferase activity is involved in DNA repair, cellular senescence, repression of LINE-1 retrotransposon elements and regulation of transcription. The sequence is that of NAD-dependent protein deacylase sirtuin-6 from Mus musculus (Mouse).